A 562-amino-acid polypeptide reads, in one-letter code: Tissue-type plasminogen activator (562 aa).

Positions 1 to 20 are cleaved as a signal peptide; the sequence is MNAMKRGLCCVLLLCGAVFA. Positions 21–32 are excised as a propeptide; it reads LPSQEIHARVRR. Residues 33–35 constitute a propeptide, removed by plasmin; sequence GAR. The region spanning 39-81 is the Fibronectin type-I domain; sequence VICRDEKTQMIYQQHQSWLRPVLRSNRVEYCWCNSGRAQCHSV. 17 cysteine pairs are disulfide-bonded: Cys-41–Cys-71, Cys-69–Cys-78, Cys-86–Cys-97, Cys-91–Cys-108, Cys-110–Cys-119, Cys-127–Cys-208, Cys-148–Cys-190, Cys-179–Cys-203, Cys-215–Cys-296, Cys-236–Cys-278, Cys-267–Cys-291, Cys-299–Cys-430, Cys-342–Cys-358, Cys-350–Cys-419, Cys-444–Cys-519, Cys-476–Cys-492, and Cys-509–Cys-537. Positions 42-52 are important for binding to annexin A2; sequence RDEKTQMIYQQ. Positions 82–120 constitute an EGF-like domain; the sequence is PVRSCSEPRCFNGGTCQQALYFSDFVCQCPEGFAGKCCE. Thr-96 is a glycosylation site (O-linked (Fuc) threonine). Kringle domains follow at residues 126–208 and 214–296; these read TCYE…TPAC and DCYF…VPSC. Residue Asn-152 is glycosylated (N-linked (GlcNAc...) asparagine). The Peptidase S1 domain occupies 311–561; that stretch reads IKGGLFADIA…YLDWIHDNMR (251 aa). Active-site charge relay system residues include His-357 and Asp-406. N-linked (GlcNAc...) asparagine glycosylation occurs at Asn-483. Ser-513 serves as the catalytic Charge relay system.

The protein belongs to the peptidase S1 family. Heterodimer of chain A and chain B held by a disulfide bond. Binds to fibrin with high affinity. This interaction leads to an increase in the catalytic efficiency of the enzyme due to an increase in affinity for plasminogen. Similarly, binding to heparin increases the activation of plasminogen. Binds to annexin A2, cytokeratin-8, fibronectin and laminin. Binds to mannose receptor and the low-density lipoprotein receptor-related protein (LRP1); these proteins are involved in TPA clearance. Binds LRP1B; binding is followed by internalization and degradation. Forms heterodimer with SERPINA5. Interacts with SERPINE1. In complex with SERPINE1, interacts with SORL1. In terms of processing, the single chain, almost fully active enzyme, can be further processed into a two-chain fully active form by a cleavage after Arg-310 catalyzed by plasmin, tissue kallikrein or factor Xa.

The protein localises to the secreted. It localises to the extracellular space. The catalysed reaction is Specific cleavage of Arg-|-Val bond in plasminogen to form plasmin.. With respect to regulation, inhibited by SERPINA5. Inhibited by SERPINE1. Its function is as follows. Converts the abundant, but inactive, zymogen plasminogen to plasmin by hydrolyzing a single Arg-Val bond in plasminogen. By controlling plasmin-mediated proteolysis, it plays an important role in tissue remodeling and degradation, in cell migration and many other physiopathological events. During oocyte activation, plays a role in cortical granule reaction in the zona reaction, which contributes to the block to polyspermy. This is Tissue-type plasminogen activator (PLAT) from Pongo abelii (Sumatran orangutan).